The following is a 359-amino-acid chain: Alkanal monooxygenase alpha chain (359 aa).

The protein belongs to the bacterial luciferase oxidoreductase family. In terms of assembly, heterodimer of an alpha and a beta chain.

The catalysed reaction is a long-chain fatty aldehyde + FMNH2 + O2 = a long-chain fatty acid + hnu + FMN + H2O + 2 H(+). In terms of biological role, light-emitting reaction in luminous bacteria. This is Alkanal monooxygenase alpha chain (luxA) from Photorhabdus laumondii subsp. laumondii (strain DSM 15139 / CIP 105565 / TT01) (Photorhabdus luminescens subsp. laumondii).